A 129-amino-acid polypeptide reads, in one-letter code: NADH-quinone oxidoreductase subunit A (129 aa).

A run of 3 helical transmembrane segments spans residues 14–34, 67–87, and 95–115; these read LAIH…VAAW, FLIA…FAWA, and WLGL…LVYL.

It belongs to the complex I subunit 3 family. As to quaternary structure, NDH-1 is composed of 14 different subunits. Subunits NuoA, H, J, K, L, M, N constitute the membrane sector of the complex.

The protein resides in the cell inner membrane. The catalysed reaction is a quinone + NADH + 5 H(+)(in) = a quinol + NAD(+) + 4 H(+)(out). NDH-1 shuttles electrons from NADH, via FMN and iron-sulfur (Fe-S) centers, to quinones in the respiratory chain. The immediate electron acceptor for the enzyme in this species is believed to be ubiquinone. Couples the redox reaction to proton translocation (for every two electrons transferred, four hydrogen ions are translocated across the cytoplasmic membrane), and thus conserves the redox energy in a proton gradient. The protein is NADH-quinone oxidoreductase subunit A of Rhodopseudomonas palustris (strain BisB5).